The following is a 158-amino-acid chain: Endoribonuclease YbeY (158 aa).

The Zn(2+) site is built by histidine 117, histidine 121, and histidine 127.

Belongs to the endoribonuclease YbeY family. The cofactor is Zn(2+).

The protein localises to the cytoplasm. In terms of biological role, single strand-specific metallo-endoribonuclease involved in late-stage 70S ribosome quality control and in maturation of the 3' terminus of the 16S rRNA. This chain is Endoribonuclease YbeY, found in Francisella philomiragia subsp. philomiragia (strain ATCC 25017 / CCUG 19701 / FSC 153 / O#319-036).